Here is a 446-residue protein sequence, read N- to C-terminus: MSFTPGKQSSSRASSGNRAGNGILKWADQSDQSSNFQTRGRRAQPKQTATSQPAGGNVVPYYSWFSGITQFQKGKEFQFAEGQGVPIAPGIPATEAKGYWYRHNRRSFKTADGNQRQLLPRWYFYYLGTGPHAKAQYGTNIDGVFWVANKQADVNTPADVVDRDPSSDEAIPTRFPPGTVLPQGYYIEGSGRSVPNSRSTSRASSRASSAGSRNRSNSGTRTPTSGVTSDMADQIASLVLAKLGKDATKPQQVTKQTAKEVRQKILNKPRQKRSPNKQCTVQQCFGKRGPNQNFGGAEMLKLGTSDPQFPILAELAPTAGAFFFGSRLELAKVQNLSGNFDEPQKDVYELRYNGAIRFDSTLPGFETIMKVLNENLNAYQQQDDGTNMSPKPQRQRGQQKGGENEDVSVAAPKSRVQQNKSRELTAEDISLVKQMDDPLTEDNSEM.

The disordered stretch occupies residues 1 to 54; that stretch reads MSFTPGKQSSSRASSGNRAGNGILKWADQSDQSSNFQTRGRRAQPKQTATSQPA. Over residues 9–22 the composition is skewed to low complexity; that stretch reads SSSRASSGNRAGNG. Composition is skewed to polar residues over residues 29-38 and 45-54; these read QSDQSSNFQT and PKQTATSQPA. Positions 52-193 are RNA-binding; the sequence is QPAGGNVVPY…GYYIEGSGRS (142 aa). The region spanning 60 to 189 is the CoV N NTD domain; the sequence is PYYSWFSGIT…VLPQGYYIEG (130 aa). Arg-105, Arg-121, and Arg-163 together coordinate RNA. 3 disordered regions span residues 157–230, 265–290, and 381–446; these read PADV…VTSD, ILNKPRQKRSPNKQCTVQQCFGKRGP, and QQDD…NSEM. A Phosphoserine; by host modification is found at Ser-166. A Phosphothreonine; by host modification is found at Thr-173. Residue Ser-190 is modified to Phosphoserine; by host. The span at 195 to 226 shows a compositional bias: low complexity; it reads PNSRSTSRASSRASSAGSRNRSNSGTRTPTSG. The CoV N CTD domain occupies 258-383; the sequence is AKEVRQKILN…ENLNAYQQQD (126 aa). Over residues 265 to 275 the composition is skewed to basic residues; the sequence is ILNKPRQKRSP. Residues 265 to 384 are dimerization; it reads ILNKPRQKRS…NLNAYQQQDD (120 aa). A phosphoserine; by host mark is found at Ser-389 and Ser-421. Thr-425 is modified (phosphothreonine; by host).

The protein belongs to the betacoronavirus nucleocapsid protein family. In terms of assembly, homooligomer. Both monomeric and oligomeric forms interact with RNA. Interacts with protein M. Interacts with NSP3; this interaction serves to tether the genome to the newly translated replicase-transcriptase complex at a very early stage of infection. Post-translationally, ADP-ribosylated. The ADP-ribosylation is retained in the virion during infection. In terms of processing, phosphorylated on serine and threonine residues.

It is found in the virion. The protein localises to the host endoplasmic reticulum-Golgi intermediate compartment. The protein resides in the host Golgi apparatus. Functionally, packages the positive strand viral genome RNA into a helical ribonucleocapsid (RNP) and plays a fundamental role during virion assembly through its interactions with the viral genome and membrane protein M. Plays an important role in enhancing the efficiency of subgenomic viral RNA transcription as well as viral replication. In Equine coronavirus (isolate NC99) (ECoV), this protein is Nucleoprotein.